Reading from the N-terminus, the 38-residue chain is Defensin-like peptide 3 (38 aa).

2 disulfide bridges follow: Cys-6–Cys-36 and Cys-13–Cys-29.

Produced by the crural gland and detected in venom from the spur located on each male hind leg.

The protein localises to the secreted. Functionally, does not show antimicrobial, myotoxic, hemolytic and cell-promoting activities. The sequence is that of Defensin-like peptide 3 from Ornithorhynchus anatinus (Duckbill platypus).